A 423-amino-acid chain; its full sequence is Core protease OPG082 (423 aa).

Catalysis depends on residues His-241, Asp-248, and Cys-328.

Belongs to the peptidase C57 family.

It is found in the virion. Functionally, late protein responsible for processing most or all of the viral core and membrane proteins known to undergo morphogenesis-associated proteolysis. These proteolytic events are involved in the transformation of immature virions (IV) into mature virions (MV). Probably cleaves at least the OPG129, OPG136, OPG098, and OPG144 precursors preferentially at Ala-Gly-|-Ala motifs. Also seems to process Ala-Gly-|-Ser and Ala-Gly-|-Thr motifs. This chain is Core protease OPG082 (OPG083), found in Homo sapiens (Human).